The chain runs to 184 residues: Large ribosomal subunit protein uL6 (184 aa).

It belongs to the universal ribosomal protein uL6 family. Part of the 50S ribosomal subunit.

Its function is as follows. This protein binds to the 23S rRNA, and is important in its secondary structure. It is located near the subunit interface in the base of the L7/L12 stalk, and near the tRNA binding site of the peptidyltransferase center. The polypeptide is Large ribosomal subunit protein uL6 (Salinibacter ruber (strain DSM 13855 / M31)).